We begin with the raw amino-acid sequence, 281 residues long: Tryptophan synthase alpha chain (281 aa).

Catalysis depends on proton acceptor residues E49 and D60.

It belongs to the TrpA family. Tetramer of two alpha and two beta chains.

The catalysed reaction is (1S,2R)-1-C-(indol-3-yl)glycerol 3-phosphate + L-serine = D-glyceraldehyde 3-phosphate + L-tryptophan + H2O. It participates in amino-acid biosynthesis; L-tryptophan biosynthesis; L-tryptophan from chorismate: step 5/5. Functionally, the alpha subunit is responsible for the aldol cleavage of indoleglycerol phosphate to indole and glyceraldehyde 3-phosphate. The chain is Tryptophan synthase alpha chain from Methanocaldococcus jannaschii (strain ATCC 43067 / DSM 2661 / JAL-1 / JCM 10045 / NBRC 100440) (Methanococcus jannaschii).